The sequence spans 413 residues: Aspartate kinase (413 aa).

2 ACT domains span residues 267–341 (LTIR…GDTK) and 347–413 (IVGV…RQGE).

The protein belongs to the aspartokinase family. Homotrimer. In the presence of inhibitory amino acids the Stokes radius of the protein increases, suggesting its oligomeric state may change.

Its subcellular location is the cytoplasm. The catalysed reaction is L-aspartate + ATP = 4-phospho-L-aspartate + ADP. It functions in the pathway amino-acid biosynthesis; L-lysine biosynthesis via DAP pathway; (S)-tetrahydrodipicolinate from L-aspartate: step 1/4. The protein operates within amino-acid biosynthesis; L-methionine biosynthesis via de novo pathway; L-homoserine from L-aspartate: step 1/3. Its pathway is amino-acid biosynthesis; L-threonine biosynthesis; L-threonine from L-aspartate: step 1/5. With respect to regulation, activated by L-lysine, L-methionine, and L-isoleucine. L-threonine, at low concentrations, is a mild activator and has a weak inhibitory effect only at concentrations over 10 mM. Strongly feedback inhibited by the concerted combination of L-lysine and L-threonine and slightly feedback inhibited by the concerted combination of L-threonine and L-methionine. Activated by the combination of L-methionine and L-lysine, L-methionine and L-isoleucine and L-lysine and L-isoleucine. Involved in the biosynthesis of L-aspartate-beta-semialdehyde which is a central intermediate in the biosynthesis of different amino acids (L-lysine, L-methionine, L-threonine). Catalyzes the phosphorylation of the beta-carboxyl group of L-aspartate to yield 4-phospho-L-aspartate. This chain is Aspartate kinase, found in Pseudomonas fluorescens (strain SBW25).